We begin with the raw amino-acid sequence, 514 residues long: Respiratory nitrate reductase 2 beta chain (514 aa).

4Fe-4S ferredoxin-type domains are found at residues 7-35 (VGMVLNLDKCIGCHTCSVTCKNVWTGREG), 174-205 (TFMMYLPRLCEHCLNPSCVATCPSGAIYKREE), and 207-236 (GIVLIDQDKCRGWRLCISGCPYKKIYFNWK). Residues Cys-16, Cys-19, Cys-22, Cys-26, Cys-183, Cys-186, and Cys-191 each contribute to the [4Fe-4S] cluster site. Cys-195, Cys-216, and Cys-222 together coordinate [3Fe-4S] cluster. The [4Fe-4S] cluster site is built by Cys-226, Cys-243, Cys-246, Cys-258, and Cys-262.

As to quaternary structure, dimer of heterotrimers each composed of an alpha, a beta and a gamma chain. Alpha and beta are catalytic chains; gamma chains are involved in binding the enzyme complex to the cytoplasmic membrane. [4Fe-4S] cluster serves as cofactor. Requires [3Fe-4S] cluster as cofactor.

Its subcellular location is the cell membrane. It catalyses the reaction nitrate + a quinol = a quinone + nitrite + H2O. This is a second nitrate reductase enzyme which can substitute for the NRA enzyme and allows E.coli to use nitrate as an electron acceptor during anaerobic growth. The beta chain is an electron transfer unit containing four cysteine clusters involved in the formation of iron-sulfur centers. Electrons are transferred from the gamma chain to the molybdenum cofactor of the alpha subunit. This chain is Respiratory nitrate reductase 2 beta chain (narY), found in Escherichia coli (strain K12).